The sequence spans 347 residues: MRIEQELKLGFKDVLFRPKRSTLKSRSQVELTRDFTFKHSGRQWSGTPVIAANMDSVGSFAMAKALSEHGVMTAVHKHYTVADWAEFIKENDASVLKNAMVSTGTSEADFQKTKDIMALTDDLIFICIDIANGYSEHLVQYVEKVRAEFPDKVISAGNVVTGDMVEELILAGADIVKVGIGPGSVCTTRVKTGVGYPQLSAIIECADAAHGLGGRIIGDGGCSCAGDVSKAFGGGADFVMLGGMLAGHEESGGEVIEQDGKTFMKFYGMSSQSAMDKHSGGVAKYRAAEGKTVLLPFRGSVHNTISDILGGVRSTCTYVGAAKLKELTKRTTFIRVQEQENNVFGKE.

An NADP(+)-binding site is contributed by 108-131; that stretch reads ADFQKTKDIMALTDDLIFICIDIA. Residues Gly-181 and Gly-183 each contribute to the K(+) site. Cys-186 serves as the catalytic Thioimidate intermediate. 216–239 contributes to the NADP(+) binding site; that stretch reads IIGDGGCSCAGDVSKAFGGGADFV.

Belongs to the IMPDH/GMPR family. GuaC type 1 subfamily. In terms of assembly, homotetramer.

The catalysed reaction is IMP + NH4(+) + NADP(+) = GMP + NADPH + 2 H(+). Its function is as follows. Catalyzes the irreversible NADPH-dependent deamination of GMP to IMP. It functions in the conversion of nucleobase, nucleoside and nucleotide derivatives of G to A nucleotides, and in maintaining the intracellular balance of A and G nucleotides. The polypeptide is GMP reductase (Aliivibrio fischeri (strain ATCC 700601 / ES114) (Vibrio fischeri)).